The following is a 295-amino-acid chain: Acetylglutamate kinase (295 aa).

Substrate contacts are provided by residues 66–67, arginine 88, and asparagine 193; that span reads GG.

The protein belongs to the acetylglutamate kinase family. ArgB subfamily.

The protein resides in the cytoplasm. It catalyses the reaction N-acetyl-L-glutamate + ATP = N-acetyl-L-glutamyl 5-phosphate + ADP. The protein operates within amino-acid biosynthesis; L-arginine biosynthesis; N(2)-acetyl-L-ornithine from L-glutamate: step 2/4. Catalyzes the ATP-dependent phosphorylation of N-acetyl-L-glutamate. In Afipia carboxidovorans (strain ATCC 49405 / DSM 1227 / KCTC 32145 / OM5) (Oligotropha carboxidovorans), this protein is Acetylglutamate kinase.